Consider the following 443-residue polypeptide: MLKNSHIYIIWLFGFISGFNVMITGNTLNYWFAKKDIALQTIGMLSFITLPYSINFLLAPVFDTVQIKYLNKILGHRLSWICLTSTTLISLIFILSFLDPSTDLVLLSFIAFIISFFSAAQDTILSALRTKIVPKESLGFTSGIYILGYRVGMLLASSGAIYLSIYLTFNAIYKIFAGVIFVYLILLILVARYTNSFDVMEENTSYSYVARCYAIADMNLKNKFFIKNYFNYFKNFISAYLLKIFSGFYFHRNDINLAYYIILILIFLVLYRLPDNLINVMINPFLLHLGYNAFEIASVCKFCGVMGAIIGGLIGGIIMKYKNILYSILLFGIIHALSHIFFILLEINGKNSLILFITIGVESITGGMTMTAYIAFISSLCQGKFRATQYSLLSSMMGISRSIFPIISGYMVVNFGWQNFFLFTTIITIPSLLILLKIKTKIN.

The next 13 membrane-spanning stretches (helical) occupy residues 5–25, 42–62, 78–98, 104–124, 143–163, 171–191, 230–250, 254–274, 299–319, 324–344, 354–374, 393–413, and 415–435; these read SHIYIIWLFGFISGFNVMITG, IGMLSFITLPYSINFLLAPVF, LSWICLTSTTLISLIFILSFL, LVLLSFIAFIISFFSAAQDTI, GIYILGYRVGMLLASSGAIYL, AIYKIFAGVIFVYLILLILVA, FNYFKNFISAYLLKIFSGFYF, DINLAYYIILILIFLVLYRLP, VCKFCGVMGAIIGGLIGGIIM, ILYSILLFGIIHALSHIFFIL, ILFITIGVESITGGMTMTAYI, LSSMMGISRSIFPIISGYMVV, and FGWQNFFLFTTIITIPSLLIL.

It belongs to the major facilitator superfamily.

The protein resides in the cell inner membrane. The chain is Putative transporter AmpG 1 (ampG1) from Rickettsia prowazekii (strain Madrid E).